The sequence spans 620 residues: Endoglucanase 10 (620 aa).

Residues 1–26 (MFGRDPWGGPLEISNADSATDDDRSR) form a disordered region. Residues 72 to 92 (IFMWTVGTILGVGLFIGFVMM) form a helical; Signal-anchor for type II membrane protein membrane-spanning segment. Asp-165 functions as the Nucleophile in the catalytic mechanism. 6 N-linked (GlcNAc...) asparagine glycosylation sites follow: Asn-216, Asn-314, Asn-323, Asn-344, Asn-408, and Asn-425. Active-site residues include His-513 and Asp-561. Asn-567 carries an N-linked (GlcNAc...) asparagine glycan. Residue Glu-570 is part of the active site.

The protein belongs to the glycosyl hydrolase 9 (cellulase E) family. Ubiquitous.

Its subcellular location is the membrane. The catalysed reaction is Endohydrolysis of (1-&gt;4)-beta-D-glucosidic linkages in cellulose, lichenin and cereal beta-D-glucans.. The protein is Endoglucanase 10 (GLU2) of Oryza sativa subsp. japonica (Rice).